The following is a 405-amino-acid chain: Nicotinate phosphoribosyltransferase (405 aa).

Histidine 224 bears the Phosphohistidine; by autocatalysis mark.

The protein belongs to the NAPRTase family. Post-translationally, transiently phosphorylated on a His residue during the reaction cycle. Phosphorylation strongly increases the affinity for substrates and increases the rate of nicotinate D-ribonucleotide production. Dephosphorylation regenerates the low-affinity form of the enzyme, leading to product release.

It carries out the reaction nicotinate + 5-phospho-alpha-D-ribose 1-diphosphate + ATP + H2O = nicotinate beta-D-ribonucleotide + ADP + phosphate + diphosphate. Its pathway is cofactor biosynthesis; NAD(+) biosynthesis; nicotinate D-ribonucleotide from nicotinate: step 1/1. Catalyzes the synthesis of beta-nicotinate D-ribonucleotide from nicotinate and 5-phospho-D-ribose 1-phosphate at the expense of ATP. The polypeptide is Nicotinate phosphoribosyltransferase (Methanococcoides burtonii (strain DSM 6242 / NBRC 107633 / OCM 468 / ACE-M)).